The following is a 58-amino-acid chain: MNKDKNEKEELDEEWTELIKHALEQGISPDDIRIFLNLGKKSSKPSASIERSHSINPF.

Residues 2–40 (NKDKNEKEELDEEWTELIKHALEQGISPDDIRIFLNLGK) enclose the Sin domain.

Heterodimer with SinR.

In terms of biological role, acts as an antagonist to SinR. SinI prevents SinR from binding to its target sequence on the gene for AprE. The chain is Protein SinI (sinI) from Bacillus licheniformis.